The following is a 490-amino-acid chain: Aspartyl/glutamyl-tRNA(Asn/Gln) amidotransferase subunit B (490 aa).

The protein belongs to the GatB/GatE family. GatB subfamily. As to quaternary structure, heterotrimer of A, B and C subunits.

The catalysed reaction is L-glutamyl-tRNA(Gln) + L-glutamine + ATP + H2O = L-glutaminyl-tRNA(Gln) + L-glutamate + ADP + phosphate + H(+). The enzyme catalyses L-aspartyl-tRNA(Asn) + L-glutamine + ATP + H2O = L-asparaginyl-tRNA(Asn) + L-glutamate + ADP + phosphate + 2 H(+). Functionally, allows the formation of correctly charged Asn-tRNA(Asn) or Gln-tRNA(Gln) through the transamidation of misacylated Asp-tRNA(Asn) or Glu-tRNA(Gln) in organisms which lack either or both of asparaginyl-tRNA or glutaminyl-tRNA synthetases. The reaction takes place in the presence of glutamine and ATP through an activated phospho-Asp-tRNA(Asn) or phospho-Glu-tRNA(Gln). The sequence is that of Aspartyl/glutamyl-tRNA(Asn/Gln) amidotransferase subunit B from Methylobacterium sp. (strain 4-46).